A 330-amino-acid polypeptide reads, in one-letter code: MSKNDDILLFSLSNSHQLANKIANLLKIELSPIRIDKFADGELIVAPQVPVRGRRVIIIQSTSKPVNDSLMELLIAIDSIKRASAKAISVVIPYYGYARQDRKAKPREPITARLVAKMIESAGATSVLTWDIHSLQTQGFFDIPFDSLEAVWVLMKHYFSAYKDSSNITIVSPDYGGVKRAREISIATGATLAIVDKRRSGKNQVEINNVLGDVKDRDCVIVDDMIDTGGTILGAAKIVREKGAKSITIIATHGLFNNNARQHFQQAIKDRIINKICIADTIENEPFDGLEIVSIAPAIAKCIEIYSEGTGSMSFVHDENSKVLFAKKIY.

ATP is bound by residues 40–42 (DGE) and 99–100 (RQ). The Mg(2+) site is built by His-133 and Asp-174. Lys-197 is a catalytic residue. D-ribose 5-phosphate-binding positions include Arg-199, Asp-223, and 227–231 (DTGGT).

It belongs to the ribose-phosphate pyrophosphokinase family. Class I subfamily. Homohexamer. Mg(2+) is required as a cofactor.

It localises to the cytoplasm. It carries out the reaction D-ribose 5-phosphate + ATP = 5-phospho-alpha-D-ribose 1-diphosphate + AMP + H(+). It functions in the pathway metabolic intermediate biosynthesis; 5-phospho-alpha-D-ribose 1-diphosphate biosynthesis; 5-phospho-alpha-D-ribose 1-diphosphate from D-ribose 5-phosphate (route I): step 1/1. Involved in the biosynthesis of the central metabolite phospho-alpha-D-ribosyl-1-pyrophosphate (PRPP) via the transfer of pyrophosphoryl group from ATP to 1-hydroxyl of ribose-5-phosphate (Rib-5-P). The polypeptide is Ribose-phosphate pyrophosphokinase (Ureaplasma parvum serovar 3 (strain ATCC 700970)).